We begin with the raw amino-acid sequence, 229 residues long: MAKKSKQMLAALEKVDSTKAYSVEEAVALVKETNFAKFDASVEVAYNLNIDVRKADQQIRGAMVLPNGTGKTQRVLVFARGAKAEEAKAAGADFVGEDDLVAKINGGWLDFDVVIATPDMMAIVGRLGRVLGPRNLMPNPKTGTVTMDVAKAVEESKGGKITYRADKAGNVQALIGKVSFDADKLVENFKAFHDVMAKAKPATAKGTYMANVSITSTQGVGIKVDPNSL.

This sequence belongs to the universal ribosomal protein uL1 family. As to quaternary structure, part of the 50S ribosomal subunit.

Functionally, binds directly to 23S rRNA. The L1 stalk is quite mobile in the ribosome, and is involved in E site tRNA release. Its function is as follows. Protein L1 is also a translational repressor protein, it controls the translation of the L11 operon by binding to its mRNA. This is Large ribosomal subunit protein uL1 from Streptococcus pyogenes serotype M3 (strain SSI-1).